The primary structure comprises 362 residues: ATP synthase F(1) complex catalytic subunit beta, mitochondrial (362 aa).

Lys14 is subject to N6-acetyllysine; alternate. Lys14 carries the post-translational modification N6-succinyllysine; alternate. N6-acetyllysine is present on Lys51. 6 residues coordinate ADP: Val62, Val63, Gly64, Lys65, Thr66, and Val67. Val62 is an ATP binding site. Phosphate contacts are provided by Val62, Val63, Gly64, Lys65, and Thr66. ATP-binding residues include Gly64, Lys65, Thr66, and Val67. Thr66 is a Mg(2+) binding site. Glu91 is a binding site for Mg(2+). An N6-acetyllysine; alternate mark is found at Lys112 and Lys117. Lys112 and Lys117 each carry N6-succinyllysine; alternate. The residue at position 165 (Thr165) is a Phosphothreonine. Position 279 is an N6-acetyllysine (Lys279). The residue at position 286 (Ser286) is a Phosphoserine. N6-acetyllysine is present on residues Lys333 and Lys338.

It belongs to the ATPase alpha/beta chains family. Homotrimer. Component of the ATP synthase complex composed at least of ATP5F1A/subunit alpha, ATP5F1B/subunit beta, ATP5MC1/subunit c (homooctomer), MT-ATP6/subunit a, MT-ATP8/subunit 8, ATP5ME/subunit e, ATP5MF/subunit f, ATP5MG/subunit g, ATP5MK/subunit k, ATP5MJ/subunit j, ATP5F1C/subunit gamma, ATP5F1D/subunit delta, ATP5F1E/subunit epsilon, ATP5PF/subunit F6, ATP5PB/subunit b, ATP5PD/subunit d, ATP5PO/subunit OSCP. ATP synthase complex consists of a soluble F(1) head domain (subunits alpha(3) and beta(3)) - the catalytic core - and a membrane F(0) domain - the membrane proton channel (subunits c, a, 8, e, f, g, k and j). These two domains are linked by a central stalk (subunits gamma, delta, and epsilon) rotating inside the F1 region and a stationary peripheral stalk (subunits F6, b, d, and OSCP). Interacts with PPIF. Interacts with BCL2L1 isoform BCL-X(L); the interaction mediates the association of BCL2L1 isoform BCL-X(L) with the mitochondrial membrane F(1)F(0) ATP synthase and enhances neurons metabolic efficiency. Interacts with CLN5 and PPT1. Interacts with S100A1; this interaction increases F1-ATPase activity. Interacts with MTLN. Interacts with TTC5/STRAP; the interaction results in decreased mitochondrial ATP production.

It localises to the mitochondrion inner membrane. The catalysed reaction is ATP + H2O + 4 H(+)(in) = ADP + phosphate + 5 H(+)(out). In terms of biological role, catalytic subunit beta, of the mitochondrial membrane ATP synthase complex (F(1)F(0) ATP synthase or Complex V) that produces ATP from ADP in the presence of a proton gradient across the membrane which is generated by electron transport complexes of the respiratory chain. ATP synthase complex consist of a soluble F(1) head domain - the catalytic core - and a membrane F(1) domain - the membrane proton channel. These two domains are linked by a central stalk rotating inside the F(1) region and a stationary peripheral stalk. During catalysis, ATP synthesis in the catalytic domain of F(1) is coupled via a rotary mechanism of the central stalk subunits to proton translocation. In vivo, can only synthesize ATP although its ATP hydrolase activity can be activated artificially in vitro. With the subunit alpha (ATP5F1A), forms the catalytic core in the F(1) domain. This chain is ATP synthase F(1) complex catalytic subunit beta, mitochondrial, found in Mesocricetus auratus (Golden hamster).